The primary structure comprises 542 residues: Putative CTP synthase (542 aa).

The tract at residues M1–L277 is amidoligase domain. Residue S23 coordinates CTP. S23 is a UTP binding site. ATP is bound by residues S24–V29 and D81. The Mg(2+) site is built by D81 and E151. CTP contacts are provided by residues D158–E160, K198–Q203, and K234. UTP is bound by residues K198–Q203 and K234. One can recognise a Glutamine amidotransferase type-1 domain in the interval Y310–S542. E517 is a catalytic residue.

The protein belongs to the CTP synthase family. In terms of assembly, homotetramer.

It carries out the reaction UTP + L-glutamine + ATP + H2O = CTP + L-glutamate + ADP + phosphate + 2 H(+). The enzyme catalyses L-glutamine + H2O = L-glutamate + NH4(+). It catalyses the reaction UTP + NH4(+) + ATP = CTP + ADP + phosphate + 2 H(+). It functions in the pathway pyrimidine metabolism; CTP biosynthesis via de novo pathway; CTP from UDP: step 2/2. Allosterically activated by GTP, when glutamine is the substrate; GTP has no effect on the reaction when ammonia is the substrate. The allosteric effector GTP functions by stabilizing the protein conformation that binds the tetrahedral intermediate(s) formed during glutamine hydrolysis. Inhibited by the product CTP, via allosteric rather than competitive inhibition. Its function is as follows. Catalyzes the ATP-dependent amination of UTP to CTP with either L-glutamine or ammonia as the source of nitrogen. Regulates intracellular CTP levels through interactions with the four ribonucleotide triphosphates. The sequence is that of Putative CTP synthase from Ureaplasma parvum serovar 3 (strain ATCC 700970).